Reading from the N-terminus, the 363-residue chain is Aminomethyltransferase (363 aa).

The protein belongs to the GcvT family. In terms of assembly, the glycine cleavage system is composed of four proteins: P, T, L and H.

It carries out the reaction N(6)-[(R)-S(8)-aminomethyldihydrolipoyl]-L-lysyl-[protein] + (6S)-5,6,7,8-tetrahydrofolate = N(6)-[(R)-dihydrolipoyl]-L-lysyl-[protein] + (6R)-5,10-methylene-5,6,7,8-tetrahydrofolate + NH4(+). In terms of biological role, the glycine cleavage system catalyzes the degradation of glycine. This Thermosipho melanesiensis (strain DSM 12029 / CIP 104789 / BI429) protein is Aminomethyltransferase.